The sequence spans 104 residues: MRIKNKIKKRIIELIELAYITARKGDLELAREYIKLAEMYSRKGRVKIPLKYKRMFCRKCYTPLITGVTERRRIRSKILIRTCLICNWQRRYVLSRNKGSNKEN.

Zn(2+) contacts are provided by Cys-57, Cys-60, Cys-83, and Cys-86.

This sequence belongs to the eukaryotic/archaeal RNase P protein component 4 family. As to quaternary structure, consists of a catalytic RNA component and at least 4-5 protein subunits. Zn(2+) is required as a cofactor.

It localises to the cytoplasm. The enzyme catalyses Endonucleolytic cleavage of RNA, removing 5'-extranucleotides from tRNA precursor.. Functionally, part of ribonuclease P, a protein complex that generates mature tRNA molecules by cleaving their 5'-ends. In Saccharolobus islandicus (strain M.14.25 / Kamchatka #1) (Sulfolobus islandicus), this protein is Ribonuclease P protein component 4.